Consider the following 246-residue polypeptide: ATP synthase subunit a (246 aa).

5 helical membrane passes run 34–54 (GQTM…TFIG), 92–112 (WVPL…LGQL), 130–150 (DINT…YAGL), 155–175 (FGYF…VLEF), and 196–216 (VVAV…MILF).

This sequence belongs to the ATPase A chain family. In terms of assembly, F-type ATPases have 2 components, CF(1) - the catalytic core - and CF(0) - the membrane proton channel. CF(1) has five subunits: alpha(3), beta(3), gamma(1), delta(1), epsilon(1). CF(0) has four main subunits: a, b, b' and c.

It is found in the cell inner membrane. Functionally, key component of the proton channel; it plays a direct role in the translocation of protons across the membrane. The sequence is that of ATP synthase subunit a from Gloeobacter violaceus (strain ATCC 29082 / PCC 7421).